The following is a 236-amino-acid chain: Phosphoribosylformylglycinamidine synthase subunit PurQ (236 aa).

Residues 2–234 enclose the Glutamine amidotransferase type-1 domain; the sequence is RFAVVTFPGS…LSVGLEVAHS (233 aa). The active-site Nucleophile is the C86. Active-site residues include H203 and E205.

Part of the FGAM synthase complex composed of 1 PurL, 1 PurQ and 2 PurS subunits.

The protein localises to the cytoplasm. It carries out the reaction N(2)-formyl-N(1)-(5-phospho-beta-D-ribosyl)glycinamide + L-glutamine + ATP + H2O = 2-formamido-N(1)-(5-O-phospho-beta-D-ribosyl)acetamidine + L-glutamate + ADP + phosphate + H(+). The enzyme catalyses L-glutamine + H2O = L-glutamate + NH4(+). It functions in the pathway purine metabolism; IMP biosynthesis via de novo pathway; 5-amino-1-(5-phospho-D-ribosyl)imidazole from N(2)-formyl-N(1)-(5-phospho-D-ribosyl)glycinamide: step 1/2. Part of the phosphoribosylformylglycinamidine synthase complex involved in the purines biosynthetic pathway. Catalyzes the ATP-dependent conversion of formylglycinamide ribonucleotide (FGAR) and glutamine to yield formylglycinamidine ribonucleotide (FGAM) and glutamate. The FGAM synthase complex is composed of three subunits. PurQ produces an ammonia molecule by converting glutamine to glutamate. PurL transfers the ammonia molecule to FGAR to form FGAM in an ATP-dependent manner. PurS interacts with PurQ and PurL and is thought to assist in the transfer of the ammonia molecule from PurQ to PurL. The polypeptide is Phosphoribosylformylglycinamidine synthase subunit PurQ (Thermomicrobium roseum (strain ATCC 27502 / DSM 5159 / P-2)).